A 352-amino-acid chain; its full sequence is Phenylalanine--tRNA ligase alpha subunit (352 aa).

Residue Glu-258 coordinates Mg(2+).

The protein belongs to the class-II aminoacyl-tRNA synthetase family. Phe-tRNA synthetase alpha subunit type 1 subfamily. In terms of assembly, tetramer of two alpha and two beta subunits. Mg(2+) serves as cofactor.

Its subcellular location is the cytoplasm. It carries out the reaction tRNA(Phe) + L-phenylalanine + ATP = L-phenylalanyl-tRNA(Phe) + AMP + diphosphate + H(+). This is Phenylalanine--tRNA ligase alpha subunit from Staphylococcus carnosus (strain TM300).